A 340-amino-acid chain; its full sequence is MKHTAEFLDTHQTQISSILSGGYNHPLLREWQNERQLAKNMFIFPLFVSDMPDEDQPIESLPNIRRFGVNKLAGYLKPLVAKGLRAVLLFGVPMKPNSKDEFGSAADDPEGPVIQAIKLLRAEFPELYILCDVCLCEYTSHGHCGVLYDDGSINREQSVRRLAAVAVNYAKAGAHSVAPSDMIDGRIRDIKLGLLAAGLAHKTFVMSYAAKFSGNLYGPFRDAACSAPSQGDRKCYQLPSGGRGLARRALRRDLDEGADGIIVKPSTFYLDIMADASEIAKDVPICAYHVSGEYAMLHAAAKAGVVDFKSIAFESHQGFLRAGARLIISYMTPEFLDWLS.

Zn(2+) is bound by residues Cys134, Cys136, and Cys144. The Schiff-base intermediate with substrate role is filled by Lys211. The 5-aminolevulinate site is built by Arg221 and Arg233. Lys264 functions as the Schiff-base intermediate with substrate in the catalytic mechanism. 2 residues coordinate 5-aminolevulinate: Ser291 and Tyr330.

Belongs to the ALAD family. In terms of assembly, homooctamer. The cofactor is Zn(2+).

It carries out the reaction 2 5-aminolevulinate = porphobilinogen + 2 H2O + H(+). The protein operates within porphyrin-containing compound metabolism; protoporphyrin-IX biosynthesis; coproporphyrinogen-III from 5-aminolevulinate: step 1/4. Functionally, catalyzes an early step in the biosynthesis of tetrapyrroles. Binds two molecules of 5-aminolevulinate per subunit, each at a distinct site, and catalyzes their condensation to form porphobilinogen. The chain is Delta-aminolevulinic acid dehydratase (HEM2) from Eremothecium gossypii (strain ATCC 10895 / CBS 109.51 / FGSC 9923 / NRRL Y-1056) (Yeast).